The primary structure comprises 321 residues: Protein stand still (321 aa).

Coiled-coil stretches lie at residues 74-103 (KLHE…RKKA) and 147-167 (KQEQ…KANL). Basic and acidic residues predominate over residues 146-162 (HKQEQEGATRKLEDSTS). 2 disordered regions span residues 146–166 (HKQE…DKAN) and 227–248 (QVPP…MEDV). Residues 235-244 (SKSSGSLASS) show a composition bias toward low complexity. Residues 272–292 (QRDVLQRLERSMAQISQELHC) adopt a coiled-coil conformation.

Germ cells specific. Expressed in all germ cells. During the first instar larvae, it is expressed in all germ cells of both sexes. In third instar larvae, it decreases in male germ cells while it remains in female germ cells. In adult ovary, it is expressed in cells of the germarium, including the stem cells. In the early previtellogenic stages, it is highly expressed in the nurse cells. During vitellogenesis, it is not translocated into the maturing egg. In testes, it is only expressed during some steps of male germline differentiation. At the apex testis, it is expressed at low level in stem cells and dividing spermatogonia, while in newly formed 16-cell cysts of primary spermatocytes, it is transiently but strongly expressed before vanishing during spermatocyte growth phase.

The protein resides in the nucleus. Essential in the female germline for proper survival, sex determination and differentiation. Participates in the transcriptional activation of Otu. Does not regulate the expression of Ovo. This is Protein stand still (stil) from Drosophila melanogaster (Fruit fly).